The following is a 417-amino-acid chain: Gamma-glutamyl phosphate reductase (417 aa).

Belongs to the gamma-glutamyl phosphate reductase family.

Its subcellular location is the cytoplasm. The enzyme catalyses L-glutamate 5-semialdehyde + phosphate + NADP(+) = L-glutamyl 5-phosphate + NADPH + H(+). Its pathway is amino-acid biosynthesis; L-proline biosynthesis; L-glutamate 5-semialdehyde from L-glutamate: step 2/2. Catalyzes the NADPH-dependent reduction of L-glutamate 5-phosphate into L-glutamate 5-semialdehyde and phosphate. The product spontaneously undergoes cyclization to form 1-pyrroline-5-carboxylate. The polypeptide is Gamma-glutamyl phosphate reductase (Pectobacterium carotovorum subsp. carotovorum (strain PC1)).